The sequence spans 435 residues: Xylose isomerase (435 aa).

Active-site residues include histidine 100 and aspartate 103. Glutamate 231, glutamate 267, histidine 270, aspartate 295, aspartate 306, aspartate 308, and aspartate 338 together coordinate Mg(2+).

It belongs to the xylose isomerase family. In terms of assembly, homotetramer. Mg(2+) is required as a cofactor.

The protein resides in the cytoplasm. It carries out the reaction alpha-D-xylose = alpha-D-xylulofuranose. This Brucella suis biovar 1 (strain 1330) protein is Xylose isomerase.